We begin with the raw amino-acid sequence, 248 residues long: Deoxyribose-phosphate aldolase (248 aa).

D117 functions as the Proton donor/acceptor in the catalytic mechanism. Catalysis depends on K179, which acts as the Schiff-base intermediate with acetaldehyde. K208 serves as the catalytic Proton donor/acceptor.

The protein belongs to the DeoC/FbaB aldolase family. DeoC type 1 subfamily.

The protein localises to the cytoplasm. The enzyme catalyses 2-deoxy-D-ribose 5-phosphate = D-glyceraldehyde 3-phosphate + acetaldehyde. It participates in carbohydrate degradation; 2-deoxy-D-ribose 1-phosphate degradation; D-glyceraldehyde 3-phosphate and acetaldehyde from 2-deoxy-alpha-D-ribose 1-phosphate: step 2/2. Functionally, catalyzes a reversible aldol reaction between acetaldehyde and D-glyceraldehyde 3-phosphate to generate 2-deoxy-D-ribose 5-phosphate. This chain is Deoxyribose-phosphate aldolase, found in Thermotoga maritima (strain ATCC 43589 / DSM 3109 / JCM 10099 / NBRC 100826 / MSB8).